Consider the following 538-residue polypeptide: Probable folate-biopterin transporter 9, chloroplastic (538 aa).

Residues M1–S57 constitute a chloroplast transit peptide. The next 12 membrane-spanning stretches (helical) occupy residues V85–L105, L129–A149, V152–F172, V178–V198, A220–L240, I246–K266, L309–Y329, S339–Y359, A370–V390, L395–L415, L447–I467, and I479–L499.

This sequence belongs to the major facilitator superfamily. Folate-biopterin transporter (TC 2.A.71) family.

It is found in the plastid. Its subcellular location is the chloroplast membrane. Functionally, could mediate folate transport. The polypeptide is Probable folate-biopterin transporter 9, chloroplastic (Arabidopsis thaliana (Mouse-ear cress)).